The following is an 878-amino-acid chain: MERSFTVECPPFEVEISHWDRILPPTHSKRILCFSLPETTDKEKVVEQLHIAFHHTVQRLPLLAGSVVPFSSHQGGRPWLRNIIPEGGAQLIVKDLSEELRFSDLAKTNFSQHLLNTEQLCPLPEVGYFKNESVDVCRFQANFIEGGLLLVVSIIHNAADGRGVTEVIKIFANELSKAQSGETHYPLEPRPDVYRTDRTKLVSGHGVPGSIENHAAWTSDPANAHAQIHNVENSCRTFRISVKALSDLKKSLSATSRGPDEWFSTNDAISAFIWRSIMLARHRAGILNGDAETYVAQPVDCRPHLEIPMPYFGNVIYMTKSSVPLSDLADFESGLGAAARALRADIKGVTAEKFRDLVGYAERTALETHTRLNILEAMSTSGIILTSLFKMDLHGMNFGPIFGDGHIKALRLPARGTQAGAVIVLPRVPDGSCEFMVTEQESTIKCLLEDEYFSRFTNDADSIGASSEEVVAPLPQPPITSEEGMISIDSTPPVIEAITIKSAPDIEPVTIEAATTEVEPITIKSISDTETVTIGITTTEVGPASTEATSPVVEPSTMESDLVEPVTVGTTNSEVESVTTETTASKVQALTTISKEWHLVPAGDVKMPSTLISNRIDAPQVGTIKIIQLNRPAAKNALSVQMVHELSCEIEEIHNERHMGGTRALVIASAVDGVFCAGADLKERKDMSLTETQAFLTSLRGLYSRLAALPIPTIACVSGHALGGGLELALCCHLRVFASNAVAALPETRLAIIPGAGGTYRLPNIVGMSNALDMILTGRGVPASEAAKMGLCNRLVGADGSEDTQAFSNRVLALETGIQLAEQISDAGPIAIRAAIRALSYSCEAVENAAYESVLTTKDRKAALAAFSEKRKPILVGE.

The segment at Val541–Asp561 is disordered. Substrate is bound by residues Ala677–Leu681 and Gly724.

Belongs to the enoyl-CoA hydratase/isomerase family.

It functions in the pathway secondary metabolite biosynthesis. Functionally, enoyl-CoA isomerase/hydratase; part of the cla gene cluster that produces clavatol and ortho-quinone methide. The clavatol biosynthesis cluster cla and the terrestric acid cluster tra are both involved in the production of peniphenones and penilactones. The non-reducing PKS claF is responsible for the formation of clavatol from successive condensations of 3 malonyl-CoA units, presumably with a simple acetyl-CoA starter unit, and 2 methylation steps. The esterase claE probably collaborates with claF by catalyzing the hydrolysis of ACP-bound acyl intermediates to free the ACP from stalled intermediates. The clavatol oxidase claD then converts clavatol to hydroxyclavatol. Spontaneous dehydration of hydroxyclavatol leads to the accumulation of the highly active ortho-quinone methide. On the other hand, the PKS-NRPS hybrid traA is involved in the formation of crustosic acid, with the help of traB and traD. The polyketide synthase module (PKS) of traA is responsible for the synthesis of the polyketide backbone via the condensation of an acetyl-CoA starter unit with 3 malonyl-CoA units. The downstream nonribosomal peptide synthetase (NRPS) module then amidates the carboxyl end of the polyketide with L-malic acid. Because traA lacks a designated enoylreductase (ER) domain, the required activity is provided the enoyl reductase traG. Crustosic acid undergoes decarboxylation and isomerization to the terrestric acid, catalyzed by the 2-oxoglutarate-dependent dioxygenase traH. Both acids are further converted to the 2 gamma-butyrolactones (R)-5-methyltetronic acid and (S)-5-carboxylmethyltetronic acid, with involvement of the cytochrome P450 monooxygenase claJ. Spontaneous addition of the methide to these gamma-butyrolactones leads to peniphenone D and penilactone D, which undergo again stereospecific attacking by methide to give penilactones A and B. The function of the enoyl-CoA isomerase/hydratase claC has not been investigated yet. The protein is Enoyl-CoA isomerase/hydratase claC of Penicillium crustosum (Blue mold fungus).